Consider the following 306-residue polypeptide: tRNA pseudouridine synthase B (306 aa).

Asp43 serves as the catalytic Nucleophile.

It belongs to the pseudouridine synthase TruB family. Type 1 subfamily.

It catalyses the reaction uridine(55) in tRNA = pseudouridine(55) in tRNA. Its function is as follows. Responsible for synthesis of pseudouridine from uracil-55 in the psi GC loop of transfer RNAs. This chain is tRNA pseudouridine synthase B, found in Heliobacterium modesticaldum (strain ATCC 51547 / Ice1).